Here is a 249-residue protein sequence, read N- to C-terminus: DNA repair protein RecO (249 aa).

Belongs to the RecO family.

Its function is as follows. Involved in DNA repair and RecF pathway recombination. The protein is DNA repair protein RecO of Lactobacillus delbrueckii subsp. bulgaricus (strain ATCC 11842 / DSM 20081 / BCRC 10696 / JCM 1002 / NBRC 13953 / NCIMB 11778 / NCTC 12712 / WDCM 00102 / Lb 14).